Here is a 308-residue protein sequence, read N- to C-terminus: uncharacterized protein (308 aa).

Transmembrane regions (helical) follow at residues 45-65 (LGLALVALIWGSTFPVVKIAL), 69-89 (SPFAFNTVRFFIACLFFLPFL), 100-120 (IGIASFLGYTFQTVGLDYTTA), 122-142 (NAGFITSTYVVLAPIISWLVY), 151-171 (VSGVLLAFVGFYFLSGYSGFN), 172-192 (IGDILMLFCALFFGAEIAMIS), 201-221 (TMLAFWQSFAIFILSAPFAVF), 226-246 (FEINTTVILCLLITAFFATFV), 263-283 (AAVILSLEGVFAHLFSVAVLA), and 285-305 (ILTPVQYFGAFLILLAVIIVS). 2 consecutive EamA domains span residues 52–166 (LIWG…FLSG) and 178–306 (LFCA…IVSL).

This sequence belongs to the EamA transporter family.

Its subcellular location is the cell membrane. This is an uncharacterized protein from Archaeoglobus fulgidus (strain ATCC 49558 / DSM 4304 / JCM 9628 / NBRC 100126 / VC-16).